Here is a 327-residue protein sequence, read N- to C-terminus: Prenyl transferase janC (327 aa).

Residues 3–23 (FPGAGPILGAIAVSSCLYFLF) form a helical membrane-spanning segment. Isopentenyl diphosphate is bound by residues lysine 63 and histidine 96. The Mg(2+) site is built by aspartate 103 and aspartate 107. Dimethylallyl diphosphate-binding residues include arginine 112 and lysine 196. Asparagine 211 carries an N-linked (GlcNAc...) asparagine glycan.

Belongs to the FPP/GGPP synthase family.

The protein resides in the membrane. It participates in secondary metabolite biosynthesis. In terms of biological role, prenyl transferase; part of the gene cluster that mediates the biosynthesis of the indole diterpenes janthitremanes such as shearinine K or shearinine A. The geranylgeranyl diphosphate (GGPP) synthase janG catalyzes the first step in janthitremane biosynthesis via conversion of farnesyl pyrophosphate and isopentyl pyrophosphate into geranylgeranyl pyrophosphate (GGPP). Condensation of indole-3-glycerol phosphate with GGPP by the prenyl transferase janC then forms 3-geranylgeranylindole (3-GGI). Epoxidation by the FAD-dependent monooxygenase janM leads to a epoxidized-GGI that is substrate of the terpene cyclase janB for cyclization to yield paspaline. Paspaline is subsequently converted to 13-desoxypaspaline by the cytochrome P450 monooxygenase janP, via beta-PC-M6 in a series of alpha-face oxidations. The cytochrome P450 monooxygenase janQ is proposed to carry out sequential beta-face oxidation steps at C-7 and C-13 of 13-desoxypaspaline to form paspalicine and paspalinine respectively. The indole diterpene prenyltransferase janD may then convert paspalinine into shearinine K which is substrate of janO and/or additional enzymes for oxidation and cyclization to generate shearinine A. This chain is Prenyl transferase janC, found in Penicillium janthinellum (Penicillium vitale).